The chain runs to 771 residues: Topoisomerase 1-associated factor 2 (771 aa).

Disordered regions lie at residues 48-69 (NSIN…SIQS), 271-330 (EGVV…ISFD), and 346-367 (SDMH…KSSL). The segment covering 51–69 (NNCSDPSPTSPSSQNSIQS) has biased composition (low complexity). The segment covering 275–294 (TQGSDNNKENIPSSTQQQKN) has biased composition (polar residues). Positions 295-307 (DGAKRAESKDLDL) are enriched in basic and acidic residues. The span at 346 to 359 (SDMHIQYSNPSSGA) shows a compositional bias: polar residues. S397 carries the phosphoserine modification. T405 is subject to Phosphothreonine. Residues 633-771 (NSKDKVEATS…KYVESDEDDQ (139 aa)) are disordered. Residues 640-652 (ATSNSTAQEQEQV) are compositionally biased toward polar residues. The span at 690 to 709 (SHSSPSSSSSMSLESSLDSS) shows a compositional bias: low complexity.

To yeast YJL076w. In terms of assembly, interacts with HPR1.

It localises to the nucleus. This Saccharomyces cerevisiae (strain ATCC 204508 / S288c) (Baker's yeast) protein is Topoisomerase 1-associated factor 2 (TOF2).